Here is a 641-residue protein sequence, read N- to C-terminus: SUMO-activating enzyme subunit 2 (641 aa).

ATP contacts are provided by residues 24–29, aspartate 48, 56–59, lysine 72, 95–96, and 117–122; these read GAGGIG, NLNR, SI, and DNNAAR. Zn(2+) contacts are provided by cysteine 158 and cysteine 161. The Glycyl thioester intermediate role is filled by cysteine 173. A Glycyl lysine isopeptide (Lys-Gly) (interchain with G-Cter in SUMO) cross-link involves residue lysine 190. A Glycyl lysine isopeptide (Lys-Gly) (interchain with G-Cter in SUMO1) cross-link involves residue lysine 236. Residues lysine 257 and lysine 275 each participate in a glycyl lysine isopeptide (Lys-Gly) (interchain with G-Cter in SUMO) cross-link. Zn(2+) is bound by residues cysteine 439 and cysteine 442. Residues 546 to 641 are disordered; the sequence is GDVPEKGPQK…EEDDDIIALD (96 aa). Over residues 556 to 579 the composition is skewed to polar residues; it reads PSEQSVKNITNGSDDGAQPSTSKA. Positions 582–594 are enriched in acidic residues; it reads QDDVLIVDSDEES. Glycyl lysine isopeptide (Lys-Gly) (interchain with G-Cter in SUMO) cross-links involve residues lysine 610, lysine 612, and lysine 623. Residues 630-641 show a composition bias toward acidic residues; the sequence is PVEEDDDIIALD.

It belongs to the ubiquitin-activating E1 family. In terms of assembly, heterodimer of sae1 and uba2/sae2. The heterodimer corresponds to the two domains that are encoded on a single polypeptide chain in ubiquitin-activating enzyme E1. Interacts with ube2i. Sumoylated with SUMO1 and SUMO2/3 and by UBC9. Sumoylation at Lys-236 inhibits enzymatic activity. Sumoylation at the C-terminal lysine cluster plays an essential role in nuclear trafficking.

The protein localises to the cytoplasm. It localises to the nucleus. Its pathway is protein modification; protein sumoylation. The heterodimer acts as an E1 ligase for sumo1, sumo2, and sumo3. It mediates ATP-dependent activation of sumo proteins followed by formation of a thioester bond between a sumo protein and a conserved active site cysteine residue on uba2/sae2. The polypeptide is SUMO-activating enzyme subunit 2 (uba2) (Xenopus tropicalis (Western clawed frog)).